We begin with the raw amino-acid sequence, 121 residues long: Small ribosomal subunit protein uS13 (121 aa).

Residues 92-121 (RKGLPVRGQRTKTNARTRKGPRKSGVQLKK) are disordered.

It belongs to the universal ribosomal protein uS13 family. As to quaternary structure, part of the 30S ribosomal subunit. Forms a loose heterodimer with protein S19. Forms two bridges to the 50S subunit in the 70S ribosome.

In terms of biological role, located at the top of the head of the 30S subunit, it contacts several helices of the 16S rRNA. In the 70S ribosome it contacts the 23S rRNA (bridge B1a) and protein L5 of the 50S subunit (bridge B1b), connecting the 2 subunits; these bridges are implicated in subunit movement. Contacts the tRNAs in the A and P-sites. This Polynucleobacter asymbioticus (strain DSM 18221 / CIP 109841 / QLW-P1DMWA-1) (Polynucleobacter necessarius subsp. asymbioticus) protein is Small ribosomal subunit protein uS13.